The chain runs to 524 residues: MPLPSCRRREQRPRQSCFQNPECHLRLRARQQRPQESAVQSTLSSSIYFSDHFVLTPPPFQITPTSIQNSTWLPIPTSPAVAAPPLPRCLGGVDGEGAPCAPPPSPIPAGPASSTVSAASSAPATRDYLGGITGHRLGQEDDSGGHEYTSVSGIHVPSSSGVAFVSFGQCPQEVISTDLCLGLGPIAATAPLQPPPPPAAAAAAGSPSATTPEPGHGEATPTTSSSAQFQTQAQQVTRDMWMACAAPKSGRLPTVGSLVYYFPDGHAEQCLSRPQEPLPGRIFLCKVTDVRLGAAATNEALATISLVPIAADDHAFQLQAPADPDPAPAQSQSLVSFVKPLTYTDVTKNRFMVPKDDAAAGVLPHIQLNDDVPLRIKDLSGKEWAFNYTWKAHTRMFRNGWMEFSNANGLVTGDNAVFMRRGNGEMFMAVRRTRNRPAPFSVEEVIEAVWRAARREPFEVSYCLRQDGDEFVVPRDIVDDGLRARFAPGMAVNFVWAVEDGKLPTIGPQGEVISIENYATSIGA.

Disordered stretches follow at residues 94 to 152 (DGEG…TSVS) and 191 to 232 (PLQP…FQTQ). Residues 100 to 109 (CAPPPSPIPA) show a composition bias toward pro residues. 2 stretches are compositionally biased toward low complexity: residues 110–124 (GPAS…SAPA) and 200–232 (AAAA…FQTQ). The segment at residues 336 to 434 (SFVKPLTYTD…EMFMAVRRTR (99 aa)) is a DNA-binding region (TF-B3).

It localises to the nucleus. The chain is B3 domain-containing protein Os07g0183700 from Oryza sativa subsp. japonica (Rice).